Reading from the N-terminus, the 643-residue chain is MDSPVLQSAYDPSGQYLCYVTVALDKQRVGVQPTQRATSSGVDTVWNENFLYLEDSKLKVTCLKWVNLASSDTVAIILGMNNGEIWLYSVLANEVTYKFTTGNSYEIKDIDLMGNQLWCIDSSDAFYQFDLLQFKLLQHFRINNCVQLNKLTIVPAGDSVAQLLVASHSISLIDIEEKKVVMTFPGHVSPVSTLQVITNEFFISGAEGDRFLNVYDIHSGMTKCVLVAESDIKELSHSGQADSIAVTTEDGSLEIFVDPLVSSSTKKRGNKSKKSSKKIQIVSKDGRKVPIYNAFINKDLLNVSWLQNATMPYFKNLQWREIPNEYTVEISLNWNNKNKSADRDLHGKDLASATNYVEGNARVTSGDNFKHVDDAIKSWERELTSLEQEQAKPPQANELLTETFGDKLESSTVARISGKKTNLKGSNLKTATTTGTVTVILSQALQSNDHSLLETVLNNRDERVIRDTIFRLKPALAVILLERLAERIARQTHRQGPLNVWVKWCLIIHGGYLVSIPNLMSTLSSLHSTLKRRSDLLPRLLALDARLDCTINKFKTLNYEAGDIHSSEPVVEEDEDDVEYNEELDDAGLIEDGEESYGSEEEEEGDSDNEEEQKHTSSKQDGRLETEQSDGEEEAGYSDVEME.

6 WD repeats span residues 14 to 54 (GQYL…LYLE), 55 to 98 (DSKL…VTYK), 186 to 225 (GHVS…TKCV), 227 to 266 (VAES…SSTK), 340 to 389 (SADR…LEQE), and 471 to 511 (RLKP…IHGG). The disordered stretch occupies residues 565–643 (HSSEPVVEED…EAGYSDVEME (79 aa)). Acidic residues predominate over residues 570 to 611 (VVEEDEDDVEYNEELDDAGLIEDGEESYGSEEEEEGDSDNEE). A compositionally biased stretch (basic and acidic residues) spans 612–626 (EQKHTSSKQDGRLET). The segment covering 627–643 (EQSDGEEEAGYSDVEME) has biased composition (acidic residues).

Belongs to the UTP5 family. As to quaternary structure, interacts with snoRNA U3. Interacts with MPP10. Component of the ribosomal small subunit (SSU) processome composed of at least 40 protein subunits and snoRNA U3. In the absence of snoRNA3, forms a complex with other t-UTPs. This complex can associate with pre-18S ribosomal RNAs.

Its subcellular location is the nucleus. It localises to the nucleolus. Its function is as follows. Involved in nucleolar processing of pre-18S ribosomal RNA. Required for optimal pre-ribosomal RNA transcription by RNA polymerase I together with a subset of U3 proteins required for transcription (t-UTPs). This chain is U3 small nucleolar RNA-associated protein 5 (UTP5), found in Saccharomyces cerevisiae (strain ATCC 204508 / S288c) (Baker's yeast).